We begin with the raw amino-acid sequence, 381 residues long: MNYNNFENSKGDGHSRLPKPTYSGTLSDGYDESKIKRQKTDSAFNAAYSPHMYPNSPYYEGSWNTGYTPQLHHVAPHNQYFHPIQPSTQYNYTSPPNYTENYIPPVHQNISYAPALNLQKWPSSYCENTQALKNDKDYQTSISYEDVAIPTVKEIQLIEKNRGKDTFMNEISPVPSSKDQASAEPTEIPRKDPELANSNAEDDHNNLGLEDDDRDEQLESEGLGKVVLVPGTSIALITDEDVKKWREERKKMWLLKISNNKQKHMQEMGIKEDELKSQPSIFKESRKEKQFIQSIQNQVQRGNPKIDLNLKLIQREFANENSQLLDFIRELGDVGLLEYELSQQEKDVLFGSSEDNNKNHYKPNYKNRKPNLSRANFTRNK.

Met1 carries the N-acetylmethionine modification. Disordered stretches follow at residues 1-38, 164-216, and 350-381; these read MNYNNFENSKGDGHSRLPKPTYSGTLSDGYDESKIKRQ, KDTF…DRDE, and FGSSEDNNKNHYKPNYKNRKPNLSRANFTRNK. Ser172 carries the phosphoserine modification. Positions 359–371 are enriched in basic residues; the sequence is NHYKPNYKNRKPN.

The protein resides in the nucleus. Involved in a late nucleoplasmic step of 60S ribosomal subunit assembly. The protein is Ribosome assembly 1 protein (RSA1) of Saccharomyces cerevisiae (strain ATCC 204508 / S288c) (Baker's yeast).